Reading from the N-terminus, the 156-residue chain is Gamma-L-glutamyl-butirosin B gamma-glutamyl cyclotransferase (156 aa).

Residue 24–27 (YGTL) participates in substrate binding. Glu89 (proton acceptor) is an active-site residue.

This sequence belongs to the gamma-glutamylcyclotransferase family.

The catalysed reaction is gamma-L-glutamyl-butirosin B = butirosin B + 5-oxo-L-proline. It functions in the pathway antibiotic biosynthesis; butirosin biosynthesis. Its function is as follows. Cyclotransferase that catalyzes the last step in the biosynthesis of the aminoglycoside antibiotic butirosin B. Cleaves the amide bond via transamidation using the alpha-amine of the terminal gamma-L-glutamate of the side chain, releasing it as the cyclic 5-oxoproline. The chain is Gamma-L-glutamyl-butirosin B gamma-glutamyl cyclotransferase (btrG) from Niallia circulans (Bacillus circulans).